Here is a 371-residue protein sequence, read N- to C-terminus: tRNA-specific 2-thiouridylase MnmA (371 aa).

ATP contacts are provided by residues 13-20 and Met-39; that span reads GMSGGVDS. The interaction with target base in tRNA stretch occupies residues 99-101; sequence NPD. Cys-104 acts as the Nucleophile in catalysis. A disulfide bridge links Cys-104 with Cys-200. Gly-128 contributes to the ATP binding site. Residues 150–152 form an interaction with tRNA region; that stretch reads KDQ. Catalysis depends on Cys-200, which acts as the Cysteine persulfide intermediate. Positions 309–310 are interaction with tRNA; that stretch reads RY.

It belongs to the MnmA/TRMU family.

The protein localises to the cytoplasm. The enzyme catalyses S-sulfanyl-L-cysteinyl-[protein] + uridine(34) in tRNA + AH2 + ATP = 2-thiouridine(34) in tRNA + L-cysteinyl-[protein] + A + AMP + diphosphate + H(+). Its function is as follows. Catalyzes the 2-thiolation of uridine at the wobble position (U34) of tRNA, leading to the formation of s(2)U34. This Bacillus subtilis (strain 168) protein is tRNA-specific 2-thiouridylase MnmA.